The primary structure comprises 428 residues: C4-dicarboxylate transport protein (428 aa).

A run of 9 helical transmembrane segments spans residues 8–28 (SLYV…HFYP), 44–64 (LIKM…IAGM), 76–96 (VALL…LIIV), 142–162 (IGAF…LFGF), 184–204 (VIFG…FGAM), 222–242 (LIIC…GSIA), 289–309 (VVGL…SIYL), 326–346 (IFHQ…AAGV), and 352–372 (IVLA…LALI).

The protein belongs to the dicarboxylate/amino acid:cation symporter (DAACS) (TC 2.A.23) family.

The protein resides in the cell inner membrane. Its function is as follows. Responsible for the transport of dicarboxylates such as succinate, fumarate, and malate from the periplasm across the membrane. The sequence is that of C4-dicarboxylate transport protein from Klebsiella pneumoniae subsp. pneumoniae (strain ATCC 700721 / MGH 78578).